The sequence spans 245 residues: 1-(5-phosphoribosyl)-5-[(5-phosphoribosylamino)methylideneamino] imidazole-4-carboxamide isomerase (245 aa).

The Proton acceptor role is filled by D8. The Proton donor role is filled by D130.

The protein belongs to the HisA/HisF family.

Its subcellular location is the cytoplasm. It catalyses the reaction 1-(5-phospho-beta-D-ribosyl)-5-[(5-phospho-beta-D-ribosylamino)methylideneamino]imidazole-4-carboxamide = 5-[(5-phospho-1-deoxy-D-ribulos-1-ylimino)methylamino]-1-(5-phospho-beta-D-ribosyl)imidazole-4-carboxamide. It functions in the pathway amino-acid biosynthesis; L-histidine biosynthesis; L-histidine from 5-phospho-alpha-D-ribose 1-diphosphate: step 4/9. In Pseudomonas entomophila (strain L48), this protein is 1-(5-phosphoribosyl)-5-[(5-phosphoribosylamino)methylideneamino] imidazole-4-carboxamide isomerase.